Here is a 283-residue protein sequence, read N- to C-terminus: 2-dehydro-3-deoxyphosphooctonate aldolase (283 aa).

The protein belongs to the KdsA family.

Its subcellular location is the cytoplasm. It catalyses the reaction D-arabinose 5-phosphate + phosphoenolpyruvate + H2O = 3-deoxy-alpha-D-manno-2-octulosonate-8-phosphate + phosphate. It participates in carbohydrate biosynthesis; 3-deoxy-D-manno-octulosonate biosynthesis; 3-deoxy-D-manno-octulosonate from D-ribulose 5-phosphate: step 2/3. It functions in the pathway bacterial outer membrane biogenesis; lipopolysaccharide biosynthesis. This Laribacter hongkongensis (strain HLHK9) protein is 2-dehydro-3-deoxyphosphooctonate aldolase.